Here is a 332-residue protein sequence, read N- to C-terminus: Phosphate acyltransferase (332 aa).

Belongs to the PlsX family. Homodimer. Probably interacts with PlsY.

The protein localises to the cytoplasm. It carries out the reaction a fatty acyl-[ACP] + phosphate = an acyl phosphate + holo-[ACP]. Its pathway is lipid metabolism; phospholipid metabolism. Its function is as follows. Catalyzes the reversible formation of acyl-phosphate (acyl-PO(4)) from acyl-[acyl-carrier-protein] (acyl-ACP). This enzyme utilizes acyl-ACP as fatty acyl donor, but not acyl-CoA. This is Phosphate acyltransferase from Nitratiruptor sp. (strain SB155-2).